The sequence spans 482 residues: Methylenetetrahydrofolate--tRNA-(uracil-5-)-methyltransferase TrmFO (482 aa).

20 to 25 (GGGLAG) provides a ligand contact to FAD.

The protein belongs to the MnmG family. TrmFO subfamily. FAD serves as cofactor.

It is found in the cytoplasm. It catalyses the reaction uridine(54) in tRNA + (6R)-5,10-methylene-5,6,7,8-tetrahydrofolate + NADH + H(+) = 5-methyluridine(54) in tRNA + (6S)-5,6,7,8-tetrahydrofolate + NAD(+). The catalysed reaction is uridine(54) in tRNA + (6R)-5,10-methylene-5,6,7,8-tetrahydrofolate + NADPH + H(+) = 5-methyluridine(54) in tRNA + (6S)-5,6,7,8-tetrahydrofolate + NADP(+). Functionally, catalyzes the folate-dependent formation of 5-methyl-uridine at position 54 (M-5-U54) in all tRNAs. This Rhodopseudomonas palustris (strain HaA2) protein is Methylenetetrahydrofolate--tRNA-(uracil-5-)-methyltransferase TrmFO.